The following is a 154-amino-acid chain: Myoglobin (154 aa).

The Globin domain maps to 2–148; it reads GLSDQEWQHV…FRNDMASKYK (147 aa). His65 provides a ligand contact to nitrite. His65 is a binding site for O2. A heme b-binding site is contributed by His94.

This sequence belongs to the globin family. In terms of assembly, monomeric.

The protein resides in the cytoplasm. The protein localises to the sarcoplasm. It catalyses the reaction Fe(III)-heme b-[protein] + nitric oxide + H2O = Fe(II)-heme b-[protein] + nitrite + 2 H(+). The enzyme catalyses H2O2 + AH2 = A + 2 H2O. In terms of biological role, monomeric heme protein which primary function is to store oxygen and facilitate its diffusion within muscle tissues. Reversibly binds oxygen through a pentacoordinated heme iron and enables its timely and efficient release as needed during periods of heightened demand. Depending on the oxidative conditions of tissues and cells, and in addition to its ability to bind oxygen, it also has a nitrite reductase activity whereby it regulates the production of bioactive nitric oxide. Under stress conditions, like hypoxia and anoxia, it also protects cells against reactive oxygen species thanks to its pseudoperoxidase activity. In Uria lomvia (Thick-billed murre), this protein is Myoglobin (MB).